A 233-amino-acid polypeptide reads, in one-letter code: Large ribosomal subunit protein uL1 (233 aa).

Belongs to the universal ribosomal protein uL1 family. As to quaternary structure, part of the 50S ribosomal subunit.

Binds directly to 23S rRNA. The L1 stalk is quite mobile in the ribosome, and is involved in E site tRNA release. Its function is as follows. Protein L1 is also a translational repressor protein, it controls the translation of the L11 operon by binding to its mRNA. The chain is Large ribosomal subunit protein uL1 from Shewanella sp. (strain MR-4).